A 79-amino-acid chain; its full sequence is Small ribosomal subunit protein bS16cz (79 aa).

The protein belongs to the bacterial ribosomal protein bS16 family.

It localises to the plastid. Its subcellular location is the chloroplast. This is Small ribosomal subunit protein bS16cz from Arabidopsis thaliana (Mouse-ear cress).